A 79-amino-acid polypeptide reads, in one-letter code: MAQQRRGGFKRRKKVDYIAANKIEYVDYKDTELLSRFISERGKILPRRVTGTSAKNQRKVTTAIKRARVMALLPFVNED.

Belongs to the bacterial ribosomal protein bS18 family. As to quaternary structure, part of the 30S ribosomal subunit. Forms a tight heterodimer with protein bS6.

Binds as a heterodimer with protein bS6 to the central domain of the 16S rRNA, where it helps stabilize the platform of the 30S subunit. The sequence is that of Small ribosomal subunit protein bS18 from Streptococcus suis (strain 98HAH33).